The chain runs to 137 residues: Fluoride-specific ion channel FluC 1 (137 aa).

Helical transmembrane passes span 4-24 (LIYI…YYLG), 37-57 (LATL…TTYI), 67-87 (VITG…TFSV), and 98-118 (WGIA…MSGL). 2 residues coordinate Na(+): glycine 77 and threonine 80.

It belongs to the fluoride channel Fluc/FEX (TC 1.A.43) family.

The protein localises to the cell membrane. The catalysed reaction is fluoride(in) = fluoride(out). With respect to regulation, na(+) is not transported, but it plays an essential structural role and its presence is essential for fluoride channel function. Fluoride-specific ion channel. Important for reducing fluoride concentration in the cell, thus reducing its toxicity. This chain is Fluoride-specific ion channel FluC 1, found in Bacillus cereus (strain ZK / E33L).